The chain runs to 736 residues: Alpha-xylosidase A (736 aa).

A signal peptide spans 1 to 18; the sequence is MYFSSFLALGALVQAAAA. Residues asparagine 24, asparagine 279, asparagine 332, and asparagine 376 are each glycosylated (N-linked (GlcNAc...) asparagine). The active site involves aspartate 413. Residue asparagine 471 is glycosylated (N-linked (GlcNAc...) asparagine). Aspartate 505 acts as the Proton donor in catalysis. Asparagine 655, asparagine 676, asparagine 690, and asparagine 701 each carry an N-linked (GlcNAc...) asparagine glycan.

It belongs to the glycosyl hydrolase 31 family.

Its subcellular location is the secreted. The enzyme catalyses Hydrolysis of terminal, non-reducing alpha-D-xylose residues with release of alpha-D-xylose.. Catalyzes the liberation of alpha-xylose from the non-reducing terminal glucose of xyloglucan oligosaccharides. This is Alpha-xylosidase A from Aspergillus niger (strain ATCC MYA-4892 / CBS 513.88 / FGSC A1513).